Reading from the N-terminus, the 370-residue chain is Anhydro-N-acetylmuramic acid kinase (370 aa).

Position 12–19 (12–19 (GTSLDGID)) interacts with ATP.

The protein belongs to the anhydro-N-acetylmuramic acid kinase family.

It catalyses the reaction 1,6-anhydro-N-acetyl-beta-muramate + ATP + H2O = N-acetyl-D-muramate 6-phosphate + ADP + H(+). Its pathway is amino-sugar metabolism; 1,6-anhydro-N-acetylmuramate degradation. The protein operates within cell wall biogenesis; peptidoglycan recycling. In terms of biological role, catalyzes the specific phosphorylation of 1,6-anhydro-N-acetylmuramic acid (anhMurNAc) with the simultaneous cleavage of the 1,6-anhydro ring, generating MurNAc-6-P. Is required for the utilization of anhMurNAc either imported from the medium or derived from its own cell wall murein, and thus plays a role in cell wall recycling. The sequence is that of Anhydro-N-acetylmuramic acid kinase from Yersinia enterocolitica serotype O:8 / biotype 1B (strain NCTC 13174 / 8081).